The sequence spans 458 residues: MALWGGRFTQAADQRFKQFNDSLRFDYRLAEQDIVGSVAWSKALVTVGVLTADEQRQLEEALNVLLEEVRANPQQILQSDAEDIHSWVEGKLIDKVGQLGKKLHTGRSRNDQVATDLKLWCKETVRELLTANRQLQSALVETAQANQDAVMPGYTHLQRAQPVTFAHWCLAYVEMLARDESRLQDTLKRLDVSPLGCGALAGTAYEIDREQLAGWLGFASATRNSLDSVSDRDHVLELLSDAAIGMVHLSRFAEDLIFFNSGEAGFVELSDRVTSGSSLMPQKKNPDALELIRGKCGRVQGALTGMMMTLKGLPLAYNKDMQEDKEGLFDALDTWLDCLHMAALVLDGIQVKRPRCQDAAQQGYANATELADYLVAKGVPFREAHHIVGEAVVEAIRQGKPLEALPLADLQKFSRVIGDDVYPILSLQSCLDKRAAKGGVSPLQVAQAINDAKARLAL.

Belongs to the lyase 1 family. Argininosuccinate lyase subfamily.

The protein localises to the cytoplasm. The enzyme catalyses 2-(N(omega)-L-arginino)succinate = fumarate + L-arginine. It participates in amino-acid biosynthesis; L-arginine biosynthesis; L-arginine from L-ornithine and carbamoyl phosphate: step 3/3. This Salmonella newport (strain SL254) protein is Argininosuccinate lyase.